Reading from the N-terminus, the 306-residue chain is Homoserine kinase (306 aa).

An ATP-binding site is contributed by 84 to 94 (PAGLGLGSSGA).

The protein belongs to the GHMP kinase family. Homoserine kinase subfamily.

It is found in the cytoplasm. The catalysed reaction is L-homoserine + ATP = O-phospho-L-homoserine + ADP + H(+). It functions in the pathway amino-acid biosynthesis; L-threonine biosynthesis; L-threonine from L-aspartate: step 4/5. In terms of biological role, catalyzes the ATP-dependent phosphorylation of L-homoserine to L-homoserine phosphate. The protein is Homoserine kinase of Sulfolobus acidocaldarius (strain ATCC 33909 / DSM 639 / JCM 8929 / NBRC 15157 / NCIMB 11770).